The primary structure comprises 123 residues: Large ribosomal subunit protein uL14 (123 aa).

This sequence belongs to the universal ribosomal protein uL14 family. Part of the 50S ribosomal subunit. Forms a cluster with proteins L3 and L19. In the 70S ribosome, L14 and L19 interact and together make contacts with the 16S rRNA in bridges B5 and B8.

Its function is as follows. Binds to 23S rRNA. Forms part of two intersubunit bridges in the 70S ribosome. The protein is Large ribosomal subunit protein uL14 of Citrobacter koseri (strain ATCC BAA-895 / CDC 4225-83 / SGSC4696).